The primary structure comprises 347 residues: Ribosomal RNA small subunit methyltransferase C (347 aa).

This sequence belongs to the methyltransferase superfamily. RsmC family. As to quaternary structure, monomer.

The protein resides in the cytoplasm. The catalysed reaction is guanosine(1207) in 16S rRNA + S-adenosyl-L-methionine = N(2)-methylguanosine(1207) in 16S rRNA + S-adenosyl-L-homocysteine + H(+). Its function is as follows. Specifically methylates the guanine in position 1207 of 16S rRNA in the 30S particle. The sequence is that of Ribosomal RNA small subunit methyltransferase C from Serratia proteamaculans (strain 568).